The primary structure comprises 319 residues: Tetrahydromethanopterin S-methyltransferase subunit H (319 aa).

The protein belongs to the MtrH family. As to quaternary structure, the complex is composed of 8 subunits; MtrA, MtrB, MtrC, MtrD, MtrE, MtrF, MtrG and MtrH.

It carries out the reaction 5-methyl-5,6,7,8-tetrahydromethanopterin + coenzyme M + 2 Na(+)(in) = 5,6,7,8-tetrahydromethanopterin + methyl-coenzyme M + 2 Na(+)(out). It functions in the pathway one-carbon metabolism; methanogenesis from CO(2); methyl-coenzyme M from 5,10-methylene-5,6,7,8-tetrahydromethanopterin: step 2/2. Its function is as follows. Part of a complex that catalyzes the formation of methyl-coenzyme M and tetrahydromethanopterin from coenzyme M and methyl-tetrahydromethanopterin. This is an energy-conserving, sodium-ion translocating step. MtrH catalyzes the transfer of the methyl group from methyl-tetrahydromethanopterin to the corrinoid prosthetic group of MtrA. In Methanococcus aeolicus (strain ATCC BAA-1280 / DSM 17508 / OCM 812 / Nankai-3), this protein is Tetrahydromethanopterin S-methyltransferase subunit H.